Consider the following 167-residue polypeptide: NADH-quinone oxidoreductase subunit I 1 (167 aa).

4Fe-4S ferredoxin-type domains lie at 52–82 (LQRDVNGMEKCVACFLCAAACPSNCIYIEAA) and 98–127 (KVYNIDYNRCIFCGYCVEACPTDAITHGHG). 8 residues coordinate [4Fe-4S] cluster: Cys-62, Cys-65, Cys-68, Cys-72, Cys-107, Cys-110, Cys-113, and Cys-117. The segment at 148–167 (PVPPGAKPPSMADEVPAGAH) is disordered.

It belongs to the complex I 23 kDa subunit family. NDH-1 is composed of 14 different subunits. Subunits NuoA, H, J, K, L, M, N constitute the membrane sector of the complex. It depends on [4Fe-4S] cluster as a cofactor.

It localises to the cell inner membrane. It catalyses the reaction a quinone + NADH + 5 H(+)(in) = a quinol + NAD(+) + 4 H(+)(out). NDH-1 shuttles electrons from NADH, via FMN and iron-sulfur (Fe-S) centers, to quinones in the respiratory chain. The immediate electron acceptor for the enzyme in this species is believed to be ubiquinone. Couples the redox reaction to proton translocation (for every two electrons transferred, four hydrogen ions are translocated across the cytoplasmic membrane), and thus conserves the redox energy in a proton gradient. This is NADH-quinone oxidoreductase subunit I 1 from Solibacter usitatus (strain Ellin6076).